The following is a 312-amino-acid chain: Ribosomal protein uL3 glutamine methyltransferase (312 aa).

It belongs to the protein N5-glutamine methyltransferase family. PrmB subfamily.

The enzyme catalyses L-glutaminyl-[ribosomal protein uL3] + S-adenosyl-L-methionine = N(5)-methyl-L-glutaminyl-[ribosomal protein uL3] + S-adenosyl-L-homocysteine + H(+). Its function is as follows. Methylates large ribosomal subunit protein uL3 on a specific glutamine residue. In Xylella fastidiosa (strain 9a5c), this protein is Ribosomal protein uL3 glutamine methyltransferase.